The sequence spans 422 residues: Nucleoprotein (422 aa).

Polar residues-rich tracts occupy residues 1-12 (MSDNGPQSNQRS) and 22-31 (TDSTDNNQNG). Residues 1–52 (MSDNGPQSNQRSAPRITFGGPTDSTDNNQNGGRNGARPKQRRPQGLPNNTAS) form a disordered region. 2 RNA-binding regions span residues 42 to 187 (RPQG…SSRS) and 45 to 181 (GLPN…RGGS). One can recognise a CoV N NTD domain in the interval 49–176 (NTASWFTALT…TLPKGFYAEG (128 aa)). RNA contacts are provided by arginine 93, arginine 108, and arginine 150. 3 disordered regions span residues 167–214 (TLPK…MASG), 234–287 (KVSG…QGNF), and 362–422 (KTFP…STQA). Serine 177 carries the post-translational modification Phosphoserine; by host. Positions 177–204 (SRGGSQASSRSSSRSRGNSRNSTPGSSR) are SR region. Composition is skewed to low complexity over residues 180-207 (GSQASSRSSSRSRGNSRNSTPGSSRGNS) and 234-250 (KVSGKGQQQQGQTVTKK). Residues 248–365 (TKKSAAEASK…KHIDAYKTFP (118 aa)) form the CoV N CTD domain. A Nuclear localization signal motif is present at residues 257 to 265 (KKPRQKRTA). Positions 259-362 (PRQKRTATKQ…LLNKHIDAYK (104 aa)) are dimerization. Residues 368-379 (EPKKDKKKKTDE) are compositionally biased toward basic and acidic residues. A compositionally biased stretch (polar residues) spans 406 to 422 (RQLQNSMSGASADSTQA).

The protein belongs to the betacoronavirus nucleocapsid protein family. In terms of assembly, homooligomer. Both monomeric and oligomeric forms interact with RNA. Interacts with protein M. Interacts with protein E. May bind to host HNRNPA1. Interacts with NSP3; this interaction serves to tether the genome to the newly translated replicase-transcriptase complex at a very early stage of infection. May interact with host SMAD3. Interacts with host PPIA/CYPA. Proteolytically cleaved by host CASP6. The cleavage leads to two fragments and facilitates viral replication by inhibiting host IFN signaling. The two fragments may interact with IRF3 inhibiting its nuclear translocation after activation and reduce the expression of IFNB and IFN-stimulated genes. Post-translationally, ADP-ribosylated. The ADP-ribosylation is retained in the virion during infection. In terms of processing, phosphorylated on serine and threonine residues. Phosphorylated by host GSK3A and GSK3B. Phosphorylation allows recruitment of host RNA helicase DDX1 which facilitates template readthrough and enables longer subgenomic mRNA synthesis. This promotes the solubility of homodimers that would otherwise aggregate. Host phosphatase would dephosphorylate the protein during assembly at M bound membranes.

The protein localises to the virion. It is found in the host endoplasmic reticulum-Golgi intermediate compartment. It localises to the host Golgi apparatus. The protein resides in the host cytoplasm. Its subcellular location is the host perinuclear region. The protein localises to the host nucleus. Its function is as follows. Packages the positive strand viral genome RNA into a helical ribonucleocapsid (RNP) and plays a fundamental role during virion assembly through its interactions with the viral genome and membrane protein M. Plays an important role in enhancing the efficiency of subgenomic viral RNA transcription as well as viral replication. May modulate transforming growth factor-beta signaling by binding host SMAD3. The chain is Nucleoprotein from Severe acute respiratory syndrome coronavirus (SARS-CoV).